Consider the following 227-residue polypeptide: PKHD-type hydroxylase Bamb_4192 (227 aa).

The Fe2OG dioxygenase domain maps to 78-178 (KVFPPLFNRY…RVASFFWIQS (101 aa)). His96, Asp98, and His159 together coordinate Fe cation. Arg169 contributes to the 2-oxoglutarate binding site.

It depends on Fe(2+) as a cofactor. L-ascorbate serves as cofactor.

This is PKHD-type hydroxylase Bamb_4192 from Burkholderia ambifaria (strain ATCC BAA-244 / DSM 16087 / CCUG 44356 / LMG 19182 / AMMD) (Burkholderia cepacia (strain AMMD)).